A 423-amino-acid polypeptide reads, in one-letter code: 3-phosphoshikimate 1-carboxyvinyltransferase (423 aa).

Positions 21, 22, and 26 each coordinate 3-phosphoshikimate. Position 21 (K21) interacts with phosphoenolpyruvate. Phosphoenolpyruvate-binding residues include G93 and R123. Residues S168, S169, Q170, S196, D311, and K338 each coordinate 3-phosphoshikimate. A phosphoenolpyruvate-binding site is contributed by Q170. D311 (proton acceptor) is an active-site residue. Positions 342, 383, and 408 each coordinate phosphoenolpyruvate.

The protein belongs to the EPSP synthase family. Monomer.

Its subcellular location is the cytoplasm. The catalysed reaction is 3-phosphoshikimate + phosphoenolpyruvate = 5-O-(1-carboxyvinyl)-3-phosphoshikimate + phosphate. The protein operates within metabolic intermediate biosynthesis; chorismate biosynthesis. In terms of biological role, catalyzes the transfer of the enolpyruvyl moiety of phosphoenolpyruvate (PEP) to the 5-hydroxyl of shikimate-3-phosphate (S3P) to produce enolpyruvyl shikimate-3-phosphate and inorganic phosphate. The sequence is that of 3-phosphoshikimate 1-carboxyvinyltransferase from Methanosphaerula palustris (strain ATCC BAA-1556 / DSM 19958 / E1-9c).